The sequence spans 552 residues: 3-hydroxy-3-methylglutaryl-coenzyme A reductase 1 (552 aa).

Composition is skewed to low complexity over residues 79–99 (QHNQ…QQPQ) and 112–122 (QQQQQQQQQQQ). A disordered region spans residues 79–138 (QHNQQQQQKQQPSQDYIQQPQNDNNINSGKEQEQQQQQQQQQQQTPDITNQPTKTNKKIP). Polar residues predominate over residues 123 to 132 (TPDITNQPTK). The active-site Charge relay system is the E237. N-linked (GlcNAc...) asparagine glycosylation occurs at N288. The active-site Charge relay system is K369. N-linked (GlcNAc...) asparagine glycosylation is present at N375. Residue D445 is the Charge relay system of the active site. H543 functions as the Proton donor in the catalytic mechanism.

The protein belongs to the HMG-CoA reductase family.

Its subcellular location is the endoplasmic reticulum membrane. It catalyses the reaction (R)-mevalonate + 2 NADP(+) + CoA = (3S)-3-hydroxy-3-methylglutaryl-CoA + 2 NADPH + 2 H(+). The protein operates within metabolic intermediate biosynthesis; (R)-mevalonate biosynthesis; (R)-mevalonate from acetyl-CoA: step 3/3. Functionally, this transmembrane glycoprotein is involved in the control of cholesterol biosynthesis. It is the rate-limiting enzyme of the sterol biosynthesis. The sequence is that of 3-hydroxy-3-methylglutaryl-coenzyme A reductase 1 (hmgA) from Dictyostelium discoideum (Social amoeba).